We begin with the raw amino-acid sequence, 585 residues long: Arginine--tRNA ligase (585 aa).

Positions 131 to 141 (ANPTGPMHVGH) match the 'HIGH' region motif.

Belongs to the class-I aminoacyl-tRNA synthetase family. As to quaternary structure, monomer.

The protein resides in the cytoplasm. The catalysed reaction is tRNA(Arg) + L-arginine + ATP = L-arginyl-tRNA(Arg) + AMP + diphosphate. The sequence is that of Arginine--tRNA ligase from Brucella canis (strain ATCC 23365 / NCTC 10854 / RM-666).